Reading from the N-terminus, the 177-residue chain is ATP-dependent protease subunit HslV (177 aa).

Residue Thr-6 is part of the active site. Gly-161, Cys-164, and Thr-167 together coordinate Na(+).

It belongs to the peptidase T1B family. HslV subfamily. As to quaternary structure, a double ring-shaped homohexamer of HslV is capped on each side by a ring-shaped HslU homohexamer. The assembly of the HslU/HslV complex is dependent on binding of ATP.

It is found in the cytoplasm. It catalyses the reaction ATP-dependent cleavage of peptide bonds with broad specificity.. Allosterically activated by HslU binding. Its function is as follows. Protease subunit of a proteasome-like degradation complex believed to be a general protein degrading machinery. In Petrotoga mobilis (strain DSM 10674 / SJ95), this protein is ATP-dependent protease subunit HslV.